Consider the following 471-residue polypeptide: Proline and serine-rich protein 2 (471 aa).

2 disordered regions span residues Met1 to Met46 and Cys82 to Val247. Residues Leu26–Ser43 are compositionally biased toward low complexity. Residue Ser43 is modified to Phosphoserine. Thr45 carries the post-translational modification Phosphothreonine. Low complexity predominate over residues Ser90–His101. A compositionally biased stretch (pro residues) spans Leu154–Ser177. Phosphoserine is present on residues Ser187, Ser220, and Ser223. Arg263 bears the Asymmetric dimethylarginine; alternate mark. Residue Arg263 is modified to Omega-N-methylarginine; alternate. Disordered regions lie at residues Asp310–Pro365 and Pro383–Gly437. The span at Ser313–Arg324 shows a compositional bias: basic and acidic residues. Composition is skewed to polar residues over residues Ala354–Gln364 and Pro383–Ile393. The span at Tyr415 to Lys427 shows a compositional bias: basic and acidic residues. Ser431 is modified (phosphoserine). Position 450 is an omega-N-methylarginine (Arg450).

This is Proline and serine-rich protein 2 (Proser2) from Mus musculus (Mouse).